We begin with the raw amino-acid sequence, 550 residues long: C-type lectin domain family 4 member F (550 aa).

Residues 1–42 (MKEAELNRDVAKFCTDNQCVILQPQGLGPKSAAPMAPRTLRH) are Cytoplasmic-facing. A helical; Signal-anchor for type II membrane protein membrane pass occupies residues 43–69 (VQAIVALVVVTVFFSLLALFVVVLQPW). The Extracellular segment spans residues 70–550 (RQKQNEDHPV…DWSVARTDQS (481 aa)). Asn87, Asn93, Asn115, Asn132, Asn209, and Asn255 each carry an N-linked (GlcNAc...) asparagine glycan. The 101-residue stretch at 438 to 538 (NFCVSQGAHL…GTAYNWVCKK (101 aa)) folds into the C-type lectin domain. 2 cysteine pairs are disulfide-bonded: Cys440/Cys536 and Cys516/Cys528.

As to expression, kupffer cells.

It localises to the membrane. In terms of biological role, receptor with an affinity for galactose and fucose. Could be involved in endocytosis. This Rattus norvegicus (Rat) protein is C-type lectin domain family 4 member F (Clec4f).